Consider the following 365-residue polypeptide: Methylthioribose-1-phosphate isomerase (365 aa).

Asp249 (proton donor) is an active-site residue.

It belongs to the eIF-2B alpha/beta/delta subunits family. MtnA subfamily.

The protein resides in the cytoplasm. It localises to the nucleus. The catalysed reaction is 5-(methylsulfanyl)-alpha-D-ribose 1-phosphate = 5-(methylsulfanyl)-D-ribulose 1-phosphate. It participates in amino-acid biosynthesis; L-methionine biosynthesis via salvage pathway; L-methionine from S-methyl-5-thio-alpha-D-ribose 1-phosphate: step 1/6. In terms of biological role, catalyzes the interconversion of methylthioribose-1-phosphate (MTR-1-P) into methylthioribulose-1-phosphate (MTRu-1-P). The sequence is that of Methylthioribose-1-phosphate isomerase from Ostreococcus lucimarinus (strain CCE9901).